A 1291-amino-acid chain; its full sequence is DNA-directed RNA polymerase subunit beta' (1291 aa).

Zn(2+)-binding residues include cysteine 60, cysteine 62, cysteine 75, and cysteine 78. 3 residues coordinate Mg(2+): aspartate 535, aspartate 537, and aspartate 539. Positions 878, 954, 961, and 964 each coordinate Zn(2+).

This sequence belongs to the RNA polymerase beta' chain family. As to quaternary structure, the RNAP catalytic core consists of 2 alpha, 1 beta, 1 beta' and 1 omega subunit. When a sigma factor is associated with the core the holoenzyme is formed, which can initiate transcription. Mg(2+) is required as a cofactor. Requires Zn(2+) as cofactor.

The catalysed reaction is RNA(n) + a ribonucleoside 5'-triphosphate = RNA(n+1) + diphosphate. In terms of biological role, DNA-dependent RNA polymerase catalyzes the transcription of DNA into RNA using the four ribonucleoside triphosphates as substrates. The polypeptide is DNA-directed RNA polymerase subunit beta' (Thermobifida fusca (strain YX)).